A 345-amino-acid chain; its full sequence is NADPH dehydrogenase (345 aa).

23–26 is an FMN binding site; that stretch reads SPMC. Tyr28 is a substrate binding site. Residues Ala60 and Gln102 each coordinate FMN. Residue 164 to 167 participates in substrate binding; that stretch reads HGAH. FMN is bound by residues Arg215 and 307-308; that span reads GR.

This sequence belongs to the NADH:flavin oxidoreductase/NADH oxidase family. NamA subfamily. In terms of assembly, homotetramer. It depends on FMN as a cofactor.

It carries out the reaction A + NADPH + H(+) = AH2 + NADP(+). Its function is as follows. Catalyzes the reduction of the double bond of an array of alpha,beta-unsaturated aldehydes and ketones. It also reduces the nitro group of nitroester and nitroaromatic compounds. It could have a role in detoxification processes. This is NADPH dehydrogenase from Bacillus thuringiensis (strain Al Hakam).